A 463-amino-acid polypeptide reads, in one-letter code: Phosphoglucosamine mutase (463 aa).

Ser-110 acts as the Phosphoserine intermediate in catalysis. The Mg(2+) site is built by Ser-110, Asp-255, Asp-257, and Asp-259. A Phosphoserine modification is found at Ser-110.

Belongs to the phosphohexose mutase family. It depends on Mg(2+) as a cofactor. In terms of processing, activated by phosphorylation.

The enzyme catalyses alpha-D-glucosamine 1-phosphate = D-glucosamine 6-phosphate. Functionally, catalyzes the conversion of glucosamine-6-phosphate to glucosamine-1-phosphate. In Koribacter versatilis (strain Ellin345), this protein is Phosphoglucosamine mutase.